We begin with the raw amino-acid sequence, 536 residues long: SNW domain-containing protein 1 (536 aa).

The tract at residues 1–46 is disordered; it reads MALTSFLPAPTQLSQDQLEAEEKARSQRSRQTSLVSSRREPPPYGY. Ala2 carries the N-acetylalanine modification. A Phosphoserine modification is found at Ser14. A Glycyl lysine isopeptide (Lys-Gly) (interchain with G-Cter in SUMO2) cross-link involves residue Lys23. The tract at residues 59 to 79 is interaction with PPIL1; it reads GDGGAFPEIHVAQYPLDMGRK. Residues Lys81, Lys97, Lys115, Lys122, Lys141, Lys158, and Lys170 each participate in a glycyl lysine isopeptide (Lys-Gly) (interchain with G-Cter in SUMO2) cross-link. Residues 174–339 form an SNW region; it reads AQYIRYTPSQ…KARERRAGIK (166 aa). 2 positions are modified to phosphoserine: Ser182 and Ser190. Lys193 is covalently cross-linked (Glycyl lysine isopeptide (Lys-Gly) (interchain with G-Cter in SUMO2)). The disordered stretch occupies residues 209–234; the sequence is PPRFKINKKIPRGPPSPPAPVMHSPS. Residues Ser224, Ser232, and Ser234 each carry the phosphoserine modification. Residues Lys240, Lys258, Lys286, Lys339, Lys344, Lys416, and Lys441 each participate in a glycyl lysine isopeptide (Lys-Gly) (interchain with G-Cter in SUMO2) cross-link. Positions 311–386 are disordered; it reads KMAQKEKEKH…RSKLQRNENR (76 aa). Ser446 carries the post-translational modification Phosphoserine. Lys452 participates in a covalent cross-link: Glycyl lysine isopeptide (Lys-Gly) (interchain with G-Cter in SUMO2). Basic and acidic residues-rich tracts occupy residues 469 to 489 and 503 to 530; these read TNRF…RGRE and KFLE…EHEG. Positions 469–536 are disordered; it reads TNRFVPDKEF…EHEGKKRRKE (68 aa). Ser479 and Ser481 each carry phosphoserine. Lys509 is covalently cross-linked (Glycyl lysine isopeptide (Lys-Gly) (interchain with G-Cter in SUMO2)).

The protein belongs to the SNW family. As to quaternary structure, identified in the spliceosome C complex. Associates with U4/U6-U5 tri-small nuclear ribonucleoproteins (U4/U6-U5 tri-snRNPs). Component of the minor spliceosome, which splices U12-type introns. Interacts with SKI, SMAD2,SMAD3, RBPJ, RB1, PABPN1, MAGEA1, SIRT1, FOXN3, U2AF2, PPIL1, DAXX and ATP1B4. Interacts with VDR and RXRA; preferentially associates with VDR:RXRA heterodimers. Interacts with NCOR2. Interacts with MAML1. Interacts with NOTCH1 NICD; the interaction involves multimerized NOTCH1 NICD. Forms a complex with NOTCH1 NICD and MAML1; the association is dissociated by RBPJ. Associates with positive transcription elongation factor b (P-TEFb). Component of the SNARP complex which consists at least of SNIP1, SNW1, THRAP3, BCLAF1 and PNN.

Its subcellular location is the nucleus. Its function is as follows. Involved in pre-mRNA splicing as component of the spliceosome. As a component of the minor spliceosome, involved in the splicing of U12-type introns in pre-mRNAs. Required in the specific splicing of CDKN1A pre-mRNA; the function probably involves the recruitment of U2AF2 to the mRNA. May recruit PPIL1 to the spliceosome. May be involved in cyclin-D1/CCND1 mRNA stability through the SNARP complex which associates with both the 3'end of the CCND1 gene and its mRNA. Involved in transcriptional regulation. Modulates TGF-beta-mediated transcription via association with SMAD proteins, MYOD1-mediated transcription via association with PABPN1, RB1-mediated transcriptional repression, and retinoid-X receptor (RXR)- and vitamin D receptor (VDR)-dependent gene transcription in a cell line-specific manner probably involving coactivators NCOA1 and GRIP1. Is involved in NOTCH1-mediated transcriptional activation. Binds to multimerized forms of Notch intracellular domain (NICD) and is proposed to recruit transcriptional coactivators such as MAML1 to form an intermediate preactivation complex which associates with DNA-bound CBF-1/RBPJ to form a transcriptional activation complex by releasing SNW1 and redundant NOTCH1 NICD. This is SNW domain-containing protein 1 (SNW1) from Pongo abelii (Sumatran orangutan).